The chain runs to 115 residues: Movement protein TGB2 (115 aa).

The Cytoplasmic portion of the chain corresponds to 1 to 13 (MSAQGHRLTAPVN). The helical transmembrane segment at 14 to 34 (SEKVYIVLGLSFALVSITFLL) threads the bilayer. The Lumenal segment spans residues 35–74 (SRNSLPHVGDNIHSLPHGGAYRDGTKAILYNSPNLGSRVS). Residues 75–95 (LHNGKNAAFAAVLLLTLLIYG) form a helical membrane-spanning segment. The Cytoplasmic segment spans residues 96–115 (SKYISQRNHTCACGNNHSSH).

This sequence belongs to the Tymovirales TGBp2 protein family.

Its subcellular location is the host endoplasmic reticulum membrane. Plays a role in viral cell-to-cell propagation, by facilitating genome transport to neighboring plant cells through plasmosdesmata,. The sequence is that of Movement protein TGB2 from Potato virus X (PVX).